The sequence spans 173 residues: Large ribosomal subunit protein uL10 (173 aa).

Belongs to the universal ribosomal protein uL10 family. In terms of assembly, part of the ribosomal stalk of the 50S ribosomal subunit. The N-terminus interacts with L11 and the large rRNA to form the base of the stalk. The C-terminus forms an elongated spine to which L12 dimers bind in a sequential fashion forming a multimeric L10(L12)X complex.

In terms of biological role, forms part of the ribosomal stalk, playing a central role in the interaction of the ribosome with GTP-bound translation factors. The chain is Large ribosomal subunit protein uL10 from Bifidobacterium longum (strain DJO10A).